Consider the following 138-residue polypeptide: Ribulose bisphosphate carboxylase small subunit (138 aa).

It belongs to the RuBisCO small chain family. Heterohexadecamer of 8 large and 8 small subunits.

It is found in the plastid. Its subcellular location is the chloroplast. Its function is as follows. RuBisCO catalyzes two reactions: the carboxylation of D-ribulose 1,5-bisphosphate, the primary event in carbon dioxide fixation, as well as the oxidative fragmentation of the pentose substrate in the photorespiration process. Both reactions occur simultaneously and in competition at the same active site. Although the small subunit is not catalytic it is essential for maximal activity. The polypeptide is Ribulose bisphosphate carboxylase small subunit (Porphyra purpurea (Red seaweed)).